The following is a 460-amino-acid chain: Putative type II methyltransferase M.OihORF3336P (460 aa).

Positions 15–458 constitute an SAM-dependent MTase C5-type domain; that stretch reads PEVVDLFSGC…EAMKKNIQGG (444 aa). Cys97 is an active-site residue.

Belongs to the class I-like SAM-binding methyltransferase superfamily. C5-methyltransferase family.

It catalyses the reaction a 2'-deoxycytidine in DNA + S-adenosyl-L-methionine = a 5-methyl-2'-deoxycytidine in DNA + S-adenosyl-L-homocysteine + H(+). Functionally, a methylase, recognizes the double-stranded sequence 5'-ACCGGT-3', methylates C-? on both strands. No endonuclease has been identified for this methylase. The chain is Putative type II methyltransferase M.OihORF3336P from Oceanobacillus iheyensis (strain DSM 14371 / CIP 107618 / JCM 11309 / KCTC 3954 / HTE831).